Consider the following 57-residue polypeptide: Large ribosomal subunit protein bL32 (57 aa).

The interval 1 to 23 (MAVPARHTSSAKKNRRRTHYKLT) is disordered. The segment covering 9-20 (SSAKKNRRRTHY) has biased composition (basic residues).

It belongs to the bacterial ribosomal protein bL32 family.

This is Large ribosomal subunit protein bL32 from Lactococcus lactis subsp. cremoris (strain MG1363).